A 452-amino-acid polypeptide reads, in one-letter code: Pup--protein ligase (452 aa).

Residue Glu-9 coordinates Mg(2+). Arg-53 provides a ligand contact to ATP. Tyr-55 is a Mg(2+) binding site. Asp-57 serves as the catalytic Proton acceptor. Residue Glu-63 participates in Mg(2+) binding. 2 residues coordinate ATP: Thr-66 and Trp-419.

It belongs to the Pup ligase/Pup deamidase family. Pup-conjugating enzyme subfamily.

It carries out the reaction ATP + [prokaryotic ubiquitin-like protein]-L-glutamate + [protein]-L-lysine = ADP + phosphate + N(6)-([prokaryotic ubiquitin-like protein]-gamma-L-glutamyl)-[protein]-L-lysine.. The protein operates within protein degradation; proteasomal Pup-dependent pathway. It functions in the pathway protein modification; protein pupylation. Catalyzes the covalent attachment of the prokaryotic ubiquitin-like protein modifier Pup to the proteasomal substrate proteins, thereby targeting them for proteasomal degradation. This tagging system is termed pupylation. The ligation reaction involves the side-chain carboxylate of the C-terminal glutamate of Pup and the side-chain amino group of a substrate lysine. This chain is Pup--protein ligase, found in Frankia alni (strain DSM 45986 / CECT 9034 / ACN14a).